A 300-amino-acid polypeptide reads, in one-letter code: GTPase Era (300 aa).

Residues 6 to 173 (KSGFLSIIGR…VDVLKEHLPE (168 aa)) enclose the Era-type G domain. Positions 14–21 (GRPNVGKS) are G1. 14–21 (GRPNVGKS) contributes to the GTP binding site. The interval 40–44 (QTTRN) is G2. The interval 61 to 64 (DTPG) is G3. GTP-binding positions include 61 to 65 (DTPGI) and 123 to 126 (NKID). The segment at 123 to 126 (NKID) is G4. Residues 152 to 154 (ISA) are G5. The 78-residue stretch at 204-281 (TKEEVPHSIA…YLELWIKVKK (78 aa)) folds into the KH type-2 domain.

Belongs to the TRAFAC class TrmE-Era-EngA-EngB-Septin-like GTPase superfamily. Era GTPase family. As to quaternary structure, monomer.

The protein resides in the cytoplasm. It localises to the cell membrane. Functionally, an essential GTPase that binds both GDP and GTP, with rapid nucleotide exchange. Plays a role in 16S rRNA processing and 30S ribosomal subunit biogenesis and possibly also in cell cycle regulation and energy metabolism. This Oceanobacillus iheyensis (strain DSM 14371 / CIP 107618 / JCM 11309 / KCTC 3954 / HTE831) protein is GTPase Era.